Here is a 176-residue protein sequence, read N- to C-terminus: Cytochrome b (176 aa).

3 helical membrane-spanning segments follow: residues 33–53 (FGSL…FLAM), 77–98 (WLLR…YLHV), and 113–133 (WNVG…GYVL). Residues His-83 and His-97 each contribute to the heme b site.

This sequence belongs to the cytochrome b family. The cytochrome bc1 complex contains 11 subunits: 3 respiratory subunits (MT-CYB, CYC1 and UQCRFS1), 2 core proteins (UQCRC1 and UQCRC2) and 6 low-molecular weight proteins (UQCRH/QCR6, UQCRB/QCR7, UQCRQ/QCR8, UQCR10/QCR9, UQCR11/QCR10 and a cleavage product of UQCRFS1). This cytochrome bc1 complex then forms a dimer. Heme b serves as cofactor.

The protein resides in the mitochondrion inner membrane. Functionally, component of the ubiquinol-cytochrome c reductase complex (complex III or cytochrome b-c1 complex) that is part of the mitochondrial respiratory chain. The b-c1 complex mediates electron transfer from ubiquinol to cytochrome c. Contributes to the generation of a proton gradient across the mitochondrial membrane that is then used for ATP synthesis. The sequence is that of Cytochrome b (MT-CYB) from Mormopterus kalinowskii (Kalinowski's mastiff bat).